A 369-amino-acid chain; its full sequence is Epoxyqueuosine reductase (369 aa).

Catalysis depends on Asp135, which acts as the Proton donor. Positions 177–209 (IPLPVDEPSENQCGKCTACITSCPTNAIVAEGV) constitute a 4Fe-4S ferredoxin-type domain. [4Fe-4S] cluster-binding residues include Cys189, Cys192, Cys195, Cys199, Cys215, Cys242, Cys245, and Cys249.

Belongs to the QueG family. Monomer. Cob(II)alamin serves as cofactor. Requires [4Fe-4S] cluster as cofactor.

It localises to the cytoplasm. The enzyme catalyses epoxyqueuosine(34) in tRNA + AH2 = queuosine(34) in tRNA + A + H2O. Its pathway is tRNA modification; tRNA-queuosine biosynthesis. Catalyzes the conversion of epoxyqueuosine (oQ) to queuosine (Q), which is a hypermodified base found in the wobble positions of tRNA(Asp), tRNA(Asn), tRNA(His) and tRNA(Tyr). The chain is Epoxyqueuosine reductase from Vibrio cholerae serotype O1 (strain ATCC 39315 / El Tor Inaba N16961).